The primary structure comprises 379 residues: MMKDIVIIGAGFAARQLIRQLRKLDAHCPIRLITADSGDEYNKPDLSHVMSLQQHADDLTKMQATAFAEENRIALQANTRVTAIDRNAQQVVCGTDRYDYHKLVFATGASAIVPPIPGREHMLTLNSQQEYRTHEARLWQAERVLVLGAGLIGTELAMDLSRAGKRVTLVDCASSILPALMPPEVSARLQFTLTQQGVSLLLNTTVQQLEKTETGVQARFTDGRTVEVDEIISAVGLQANTQLAKAADLAVQKGIQTNAQLQTPDPQIYALGDCAEIGGKLLPFLQPIQLSAITLAKNLLGASEALTLPPMLVKIKTPLFPLQMAGDTTGSDLHWQQEWNEQGMVAKALDSQQRLRAFVVGGERMKEAFPLLRQLSATI.

Belongs to the FAD-dependent oxidoreductase family. Requires FAD as cofactor.

Its subcellular location is the cytoplasm. It catalyses the reaction 2 reduced [nitric oxide reductase rubredoxin domain] + NAD(+) + H(+) = 2 oxidized [nitric oxide reductase rubredoxin domain] + NADH. It functions in the pathway nitrogen metabolism; nitric oxide reduction. Its function is as follows. One of at least two accessory proteins for anaerobic nitric oxide (NO) reductase. Reduces the rubredoxin moiety of NO reductase. This Pectobacterium atrosepticum (strain SCRI 1043 / ATCC BAA-672) (Erwinia carotovora subsp. atroseptica) protein is Nitric oxide reductase FlRd-NAD(+) reductase.